Consider the following 427-residue polypeptide: Serine--tRNA ligase (427 aa).

231–233 (TAE) contributes to the L-serine binding site. Residue 262–264 (RSE) participates in ATP binding. Glu-285 provides a ligand contact to L-serine. 349–352 (EISS) serves as a coordination point for ATP. Residue Ser-385 coordinates L-serine.

Belongs to the class-II aminoacyl-tRNA synthetase family. Type-1 seryl-tRNA synthetase subfamily. In terms of assembly, homodimer. The tRNA molecule binds across the dimer.

The protein resides in the cytoplasm. It carries out the reaction tRNA(Ser) + L-serine + ATP = L-seryl-tRNA(Ser) + AMP + diphosphate + H(+). The catalysed reaction is tRNA(Sec) + L-serine + ATP = L-seryl-tRNA(Sec) + AMP + diphosphate + H(+). The protein operates within aminoacyl-tRNA biosynthesis; selenocysteinyl-tRNA(Sec) biosynthesis; L-seryl-tRNA(Sec) from L-serine and tRNA(Sec): step 1/1. Functionally, catalyzes the attachment of serine to tRNA(Ser). Is also able to aminoacylate tRNA(Sec) with serine, to form the misacylated tRNA L-seryl-tRNA(Sec), which will be further converted into selenocysteinyl-tRNA(Sec). This chain is Serine--tRNA ligase, found in Rhizobium etli (strain CIAT 652).